The primary structure comprises 427 residues: TNF receptor-associated factor family protein DDB_G0285149 (427 aa).

The segment at 20 to 65 adopts an RING-type zinc-finger fold; sequence CIVCTDLLSESHDKIQVNQCPHGHCLCSDCWTKQIENKKKECPICR. 2 consecutive TRAF-type zinc fingers follow at residues 122–178 and 178–234; these read THFK…INKD and DHLE…KHQA. The region spanning 284–415 is the MATH domain; sequence KYSNQWVIEN…GNKLTIKFEI (132 aa).

It belongs to the TNF receptor-associated factor family. A subfamily.

The protein resides in the cytoplasm. Functionally, probable adapter protein and signal transducer that links members of the tumor necrosis factor receptor family to different signaling pathways by association with the receptor cytoplasmic domain and kinases. This is TNF receptor-associated factor family protein DDB_G0285149 from Dictyostelium discoideum (Social amoeba).